The sequence spans 247 residues: ATP synthase subunit a (247 aa).

6 helical membrane passes run 23-43 (ISFTNSSAMMVLSICLITLFL), 90-110 (LFMFVLFGNLLGMMPIPVIGF), 116-136 (VIVTFAMALVVFVGVTVIGFA), 145-165 (MFFPHGAPIATAVILIPIELI), 194-214 (GFVVSLGAFYLIPGAVPFAFL), and 215-235 (SAITVLEFGIALLQAYVFTIL).

It belongs to the ATPase A chain family. In terms of assembly, F-type ATPases have 2 components, CF(1) - the catalytic core - and CF(0) - the membrane proton channel. CF(1) has five subunits: alpha(3), beta(3), gamma(1), delta(1), epsilon(1). CF(0) has three main subunits: a(1), b(2) and c(9-12). The alpha and beta chains form an alternating ring which encloses part of the gamma chain. CF(1) is attached to CF(0) by a central stalk formed by the gamma and epsilon chains, while a peripheral stalk is formed by the delta and b chains.

Its subcellular location is the cell inner membrane. Functionally, key component of the proton channel; it plays a direct role in the translocation of protons across the membrane. The chain is ATP synthase subunit a from Paramagnetospirillum magneticum (strain ATCC 700264 / AMB-1) (Magnetospirillum magneticum).